Reading from the N-terminus, the 449-residue chain is Secretin receptor (449 aa).

Residues 1–25 (MLSTMRPRLSLLLLRLLLLTKAAHT) form the signal peptide. At 26–141 (VGVPPRLCDV…NERRHAYLLK (116 aa)) the chain is on the extracellular side. Disulfide bonds link cysteine 46/cysteine 75, cysteine 66/cysteine 107, and cysteine 89/cysteine 123. N-linked (GlcNAc...) asparagine glycans are attached at residues asparagine 72, asparagine 100, asparagine 106, and asparagine 128. The chain crosses the membrane as a helical span at residues 142–167 (LKVMYTVGYSSSLAMLLVALSILCSF). The Cytoplasmic portion of the chain corresponds to 168–174 (RRLHCTR). A helical membrane pass occupies residues 175 to 195 (NYIHMHLFVSFILRALSNFIK). Residues 196–216 (DAVLFSSDDVTYCDAHKVGCK) are Extracellular-facing. A disulfide bridge links cysteine 215 with cysteine 285. A helical membrane pass occupies residues 217–239 (LVMIFFQYCIMANYAWLLVEGLY). Residues 240 to 254 (LHTLLAISFFSERKY) are Cytoplasmic-facing. Residues 255–276 (LQAFVLLGWGSPAIFVALWAIT) traverse the membrane as a helical segment. Residues 277 to 291 (RHFLENTGCWDINAN) lie on the Extracellular side of the membrane. N-linked (GlcNAc...) asparagine glycosylation occurs at asparagine 291. The helical transmembrane segment at 292–315 (ASVWWVIRGPVILSILINFIFFIN) threads the bilayer. The Cytoplasmic portion of the chain corresponds to 316–340 (ILRILMRKLRTQETRGSETNHYKRL). A helical transmembrane segment spans residues 341-356 (AKSTLLLIPLFGIHYI). At 357–367 (VFAFSPEDAME) the chain is on the extracellular side. Residues 368–391 (VQLFFELALGSFQGLVVAVLYCFL) form a helical membrane-spanning segment. Residues 392–449 (NGEVQLEVQKKWRQWHLQEFPLRPVAFNNSFSNATNGPTHSTKASTEQSRSIPRASII) lie on the Cytoplasmic side of the membrane. Residues 425 to 442 (ATNGPTHSTKASTEQSRS) show a composition bias toward polar residues. The disordered stretch occupies residues 425 to 449 (ATNGPTHSTKASTEQSRSIPRASII).

Belongs to the G-protein coupled receptor 2 family. In terms of processing, phosphorylated on Ser and Thr residues at the cytoplasmic C-terminus by G protein-coupled receptor kinases (GRKs). N-glycosylated. In the brain, expressed in the central amygdala, hippocampus, area postrema, nucleus of the tractus solitary and cerebellum.

The protein localises to the cell membrane. It localises to the basolateral cell membrane. Its function is as follows. G protein-coupled receptor activated by secretin (SCT), which is involved in different processes such as regulation of the pH of the duodenal content, food intake and water homeostasis. Ligand binding causes a conformation change that triggers signaling via guanine nucleotide-binding proteins (G proteins) and activates cAMP-dependent pathway. Upon binding to secretin, regulates the pH of the duodenum by (1) inhibiting the secretion of gastric acid from the parietal cells of the stomach and (2) stimulating the production of bicarbonate (NaHCO(3)) from the ductal cells of the pancreas. In addition to regulating the pH of the duodenal content, plays a central role in diet induced thermogenesis: acts as a non-sympathetic brown fat (BAT) activator mediating prandial thermogenesis, which consequentially induces satiation. Mechanistically, secretin released by the gut after a meal binds to secretin receptor (SCTR) in brown adipocytes, activating brown fat thermogenesis by stimulating lipolysis, which is sensed in the brain and promotes satiation. Also able to stimulate lipolysis in white adipocytes. Also plays an important role in cellular osmoregulation by regulating renal water reabsorption. Also plays a role in the central nervous system: required for synaptic plasticity. The sequence is that of Secretin receptor from Rattus norvegicus (Rat).